We begin with the raw amino-acid sequence, 172 residues long: Adenine phosphoribosyltransferase (172 aa).

Belongs to the purine/pyrimidine phosphoribosyltransferase family. In terms of assembly, homodimer.

It localises to the cytoplasm. The enzyme catalyses AMP + diphosphate = 5-phospho-alpha-D-ribose 1-diphosphate + adenine. The protein operates within purine metabolism; AMP biosynthesis via salvage pathway; AMP from adenine: step 1/1. Catalyzes a salvage reaction resulting in the formation of AMP, that is energically less costly than de novo synthesis. This is Adenine phosphoribosyltransferase from Streptococcus mutans serotype c (strain ATCC 700610 / UA159).